A 94-amino-acid polypeptide reads, in one-letter code: Protein RnfH (94 aa).

It belongs to the UPF0125 (RnfH) family.

This chain is Protein RnfH, found in Yersinia pestis bv. Antiqua (strain Antiqua).